The sequence spans 263 residues: Insertion sequence IS21-like putative ATP-binding protein (263 aa).

Residue 114–121 (GPSGTGKT) participates in ATP binding.

This sequence belongs to the IS21/IS1162 putative ATP-binding protein family.

This chain is Insertion sequence IS21-like putative ATP-binding protein (tnpB), found in Bacteroides fragilis.